The primary structure comprises 214 residues: Thymidylate kinase (214 aa).

9–16 (GIEGCGKT) provides a ligand contact to ATP.

It belongs to the thymidylate kinase family.

The catalysed reaction is dTMP + ATP = dTDP + ADP. Phosphorylation of dTMP to form dTDP in both de novo and salvage pathways of dTTP synthesis. This Geotalea daltonii (strain DSM 22248 / JCM 15807 / FRC-32) (Geobacter daltonii) protein is Thymidylate kinase.